The following is a 1226-amino-acid chain: Methionine synthase (1226 aa).

Residues 6 to 326 (RQQIEAQLKQ…EHIRQMAQAV (321 aa)) enclose the Hcy-binding domain. Residues cysteine 248, cysteine 311, and cysteine 312 each contribute to the Zn(2+) site. The 262-residue stretch at 357–618 (FINVGERTNV…VPEKLREAVE (262 aa)) folds into the Pterin-binding domain. Positions 651 to 745 (SALEWRTWPV…FINAEKQSGS (95 aa)) constitute a B12-binding N-terminal domain. Residues glutamate 695, 757 to 761 (GDVHD), histidine 760, serine 805, threonine 809, and alanine 861 each bind methylcob(III)alamin. Positions 747–882 (NGKILLATVK…SDERRPAFIE (136 aa)) constitute a B12-binding domain. The AdoMet activation domain maps to 898–1226 (KKPRTKPVTL…EKWLGPNING (329 aa)). S-adenosyl-L-methionine is bound by residues aspartate 948, arginine 1136, and 1191–1192 (YF).

Belongs to the vitamin-B12 dependent methionine synthase family. Requires methylcob(III)alamin as cofactor. It depends on Zn(2+) as a cofactor.

It carries out the reaction (6S)-5-methyl-5,6,7,8-tetrahydrofolate + L-homocysteine = (6S)-5,6,7,8-tetrahydrofolate + L-methionine. Its pathway is amino-acid biosynthesis; L-methionine biosynthesis via de novo pathway; L-methionine from L-homocysteine (MetH route): step 1/1. Its function is as follows. Catalyzes the transfer of a methyl group from methyl-cobalamin to homocysteine, yielding enzyme-bound cob(I)alamin and methionine. Subsequently, remethylates the cofactor using methyltetrahydrofolate. The chain is Methionine synthase (metH) from Vibrio parahaemolyticus serotype O3:K6 (strain RIMD 2210633).